The primary structure comprises 1372 residues: DNA-directed RNA polymerase subunit beta (1372 aa).

This sequence belongs to the RNA polymerase beta chain family. As to quaternary structure, the RNAP catalytic core consists of 2 alpha, 1 beta, 1 beta' and 1 omega subunit. When a sigma factor is associated with the core the holoenzyme is formed, which can initiate transcription.

The catalysed reaction is RNA(n) + a ribonucleoside 5'-triphosphate = RNA(n+1) + diphosphate. DNA-dependent RNA polymerase catalyzes the transcription of DNA into RNA using the four ribonucleoside triphosphates as substrates. This Bradyrhizobium sp. (strain BTAi1 / ATCC BAA-1182) protein is DNA-directed RNA polymerase subunit beta.